The primary structure comprises 217 residues: Growth hormone variant (217 aa).

Residues Met-1 to Ala-26 form the signal peptide. Disulfide bonds link Cys-79–Cys-191 and Cys-208–Cys-215. At Ser-132 the chain carries Phosphoserine. N-linked (GlcNAc...) asparagine glycosylation is present at Asn-166. Ser-176 is subject to Phosphoserine.

This sequence belongs to the somatotropin/prolactin family. As to expression, expressed in the placenta.

It is found in the secreted. In terms of biological role, plays an important role in growth control. Its major role in stimulating body growth is to stimulate the liver and other tissues to secrete IGF1. It stimulates both the differentiation and proliferation of myoblasts. It also stimulates amino acid uptake and protein synthesis in muscle and other tissues. The sequence is that of Growth hormone variant (GH2) from Pan troglodytes (Chimpanzee).